The chain runs to 415 residues: Plasminogen activator inhibitor 2, macrophage (415 aa).

N-linked (GlcNAc...) asparagine glycosylation is found at N23, N75, N261, and N339.

This sequence belongs to the serpin family. Ov-serpin subfamily. Interacts with PSMB1. The signal sequence is not cleaved.

It is found in the cytoplasm. The protein localises to the secreted. Its subcellular location is the extracellular space. Inhibits urokinase-type plasminogen activator. The monocyte derived PAI-2 is distinct from the endothelial cell-derived PAI-1. Not required for normal murine development or survival. The chain is Plasminogen activator inhibitor 2, macrophage (Serpinb2) from Mus musculus (Mouse).